The primary structure comprises 438 residues: Serine hydroxymethyltransferase (438 aa).

(6S)-5,6,7,8-tetrahydrofolate is bound by residues leucine 119 and 123–125 (GHL). Lysine 228 bears the N6-(pyridoxal phosphate)lysine mark. 370-372 (SPF) contacts (6S)-5,6,7,8-tetrahydrofolate.

The protein belongs to the SHMT family. In terms of assembly, homodimer. Requires pyridoxal 5'-phosphate as cofactor.

Its subcellular location is the cytoplasm. The enzyme catalyses (6R)-5,10-methylene-5,6,7,8-tetrahydrofolate + glycine + H2O = (6S)-5,6,7,8-tetrahydrofolate + L-serine. It participates in one-carbon metabolism; tetrahydrofolate interconversion. The protein operates within amino-acid biosynthesis; glycine biosynthesis; glycine from L-serine: step 1/1. Its function is as follows. Catalyzes the reversible interconversion of serine and glycine with tetrahydrofolate (THF) serving as the one-carbon carrier. This reaction serves as the major source of one-carbon groups required for the biosynthesis of purines, thymidylate, methionine, and other important biomolecules. Also exhibits THF-independent aldolase activity toward beta-hydroxyamino acids, producing glycine and aldehydes, via a retro-aldol mechanism. This chain is Serine hydroxymethyltransferase, found in Chlorobium chlorochromatii (strain CaD3).